The primary structure comprises 332 residues: MKLAIDAMGGDYAPEEIIKGSLKALDHFKDIEIFLIGKEEALKGLEGKSERLKLIYASEVIENNEAPVAAIKKKKNSSMVVGLELLKKGEVEAFLSAGNTGALMAGSLLILGRIKGIKRPALAPILPTLNGATVLLDAGSNTDCDEENLFQFAVMGHVYAQKMFGIEKPRIGLFNVGTEEEKGNEVVKKAFERLKNSRLNFIGNVEGRDIPYGVCEVVVCDGFVGNAILKSMEGIAFVISQLLKEELSRNIFTKMGALLIMGGLKRITQKMDYTEYGGAPLLGISKPVIKAHGNSKAKAIFNAIKQAKNLVGNDVLRHIKEEIELTGDEISV.

Belongs to the PlsX family. As to quaternary structure, homodimer. Probably interacts with PlsY.

The protein resides in the cytoplasm. It catalyses the reaction a fatty acyl-[ACP] + phosphate = an acyl phosphate + holo-[ACP]. The protein operates within lipid metabolism; phospholipid metabolism. Catalyzes the reversible formation of acyl-phosphate (acyl-PO(4)) from acyl-[acyl-carrier-protein] (acyl-ACP). This enzyme utilizes acyl-ACP as fatty acyl donor, but not acyl-CoA. This Caldanaerobacter subterraneus subsp. tengcongensis (strain DSM 15242 / JCM 11007 / NBRC 100824 / MB4) (Thermoanaerobacter tengcongensis) protein is Phosphate acyltransferase.